A 730-amino-acid chain; its full sequence is Stonin-1 (730 aa).

Disordered regions lie at residues 1 to 26 (MYST…KRKD), 38 to 83 (NGLK…PLST), and 132 to 159 (SPHV…AGPQ). Low complexity-rich tracts occupy residues 54–65 (PSSASSTPLSSP) and 132–143 (SPHVSLPSSHSH). Positions 269–402 (GWSFMLRIPE…KLPATAKPKN (134 aa)) constitute an SHD domain. The region spanning 407-710 (EQEICLDIQD…ACYNIQVEIE (304 aa)) is the MHD domain.

Belongs to the Stoned B family.

It localises to the cytoplasm. It is found in the membrane. May be involved in the endocytic machinery. The sequence is that of Stonin-1 (Ston1) from Mus musculus (Mouse).